The chain runs to 160 residues: Major pollen allergen Bet v 1-A (160 aa).

Lys-55, Tyr-82, Tyr-84, and Asn-101 together coordinate brassinolide.

This sequence belongs to the BetVI family.

It is found in the cytoplasm. May be a general steroid carrier protein. This is Major pollen allergen Bet v 1-A (BETVIA) from Betula pendula (European white birch).